We begin with the raw amino-acid sequence, 227 residues long: 2,3-bisphosphoglycerate-dependent phosphoglycerate mutase (227 aa).

Substrate is bound by residues 7–14 (RHGFSEWN), 20–21 (TG), R59, 86–89 (ERHY), K97, 113–114 (RR), and 182–183 (GN). H8 functions as the Tele-phosphohistidine intermediate in the catalytic mechanism. Catalysis depends on E86, which acts as the Proton donor/acceptor.

It belongs to the phosphoglycerate mutase family. BPG-dependent PGAM subfamily. In terms of assembly, homodimer.

It carries out the reaction (2R)-2-phosphoglycerate = (2R)-3-phosphoglycerate. Its pathway is carbohydrate degradation; glycolysis; pyruvate from D-glyceraldehyde 3-phosphate: step 3/5. Its function is as follows. Catalyzes the interconversion of 2-phosphoglycerate and 3-phosphoglycerate. The sequence is that of 2,3-bisphosphoglycerate-dependent phosphoglycerate mutase from Haemophilus influenzae (strain PittGG).